Consider the following 1375-residue polypeptide: DNA-directed RNA polymerase subunit beta (1375 aa).

Belongs to the RNA polymerase beta chain family. In terms of assembly, the RNAP catalytic core consists of 2 alpha, 1 beta, 1 beta' and 1 omega subunit. When a sigma factor is associated with the core the holoenzyme is formed, which can initiate transcription.

It carries out the reaction RNA(n) + a ribonucleoside 5'-triphosphate = RNA(n+1) + diphosphate. Its function is as follows. DNA-dependent RNA polymerase catalyzes the transcription of DNA into RNA using the four ribonucleoside triphosphates as substrates. This Coxiella burnetii (strain RSA 331 / Henzerling II) protein is DNA-directed RNA polymerase subunit beta.